We begin with the raw amino-acid sequence, 77 residues long: Acyl carrier protein (77 aa).

The Carrier domain occupies 2 to 77; the sequence is SSIDKRIKEI…DAIDYITDHT (76 aa). Residue Ser-37 is modified to O-(pantetheine 4'-phosphoryl)serine.

The protein belongs to the acyl carrier protein (ACP) family. 4'-phosphopantetheine is transferred from CoA to a specific serine of apo-ACP by AcpS. This modification is essential for activity because fatty acids are bound in thioester linkage to the sulfhydryl of the prosthetic group.

It is found in the cytoplasm. Its pathway is lipid metabolism; fatty acid biosynthesis. Functionally, carrier of the growing fatty acid chain in fatty acid biosynthesis. In Geotalea uraniireducens (strain Rf4) (Geobacter uraniireducens), this protein is Acyl carrier protein.